Here is a 557-residue protein sequence, read N- to C-terminus: MEFLGTTQTASFCGPKKGCGLQALPPAGQEPVVQECYQPFHLPGYRYLNAWRPSVFHKIATSQTIPEECSGIRRPPTILPSLRSALFCRYTPRDWDRSNDLQIRNAEASRLWASRLTGDSLRIMQDKDQLIHQMQEGTSRNLGQRLSDLGFWKSELCYELDRLLTENSSMDTLKRRLECAAEEVNCPLQVALECLYNREKRIGIDLVHDNVEKNLIREVDLLKCCQDQMRKLAKRIDFQIRDNRDAQHSLERDIEDKSSAQYIDENCFNLRSTSDSISFFHGVEKFDGTVSIPETWAKFSNDNIRHAQNMRANSIRLREEAEHLFETLSDQMWKQFTNTNLAFNARISEETDVKNKLQTQLAKILQEIFQAENTIMLLERAIVAKEYPLKMAQTMLACRTRRPNVELCRDVPQFRLVNEVFTIDDTLQTLKLRLRETQDTLQLLVMTKSRLEHELAIKANTLCIDKDKCMSMRKSFPSTPRLTGYTCSAIGSGPYANHAPRISSGPCSGSALCKGPASCGGGASCGGGASCGGHAPCGSALCSHSVSRSGPGFAPVC.

Positions 302–386 form a coiled coil; it reads DNIRHAQNMR…LLERAIVAKE (85 aa). Repeat copies occupy residues 507–512, 513–518, 519–524, 525–530, 531–536, and 537–541. Positions 507–541 are 6 X 6 AA approximate tandem repeats of C-[GSK]-G-[GSPH]-A-[SLP]; it reads CSGSALCKGPASCGGGASCGGGASCGGHAPCGSAL.

The protein belongs to the tektin family. Microtubule inner protein component of sperm flagellar doublet microtubules. Interacts with TEKT3. In terms of processing, ubiquitinated, leading to its degradation. Deubiquitinated by USP16, promoting its stability. Strongly expressed in germ cells of the testis (at protein level). Expressed in spermatozoa. Also detected in brain.

The protein localises to the cytoplasm. The protein resides in the cytoskeleton. It is found in the flagellum axoneme. Its function is as follows. Sperm-specific microtubule inner protein (MIP) part of the dynein-decorated doublet microtubules (DMTs) in flagellar axoneme. Forms an extensive interaction network in different conformations that reinforces the helix bundle composed by other tektin proteins (TEKT1 to TEKT4) and MIPs to anchor the tektin bundle onto the tubulin wall of A-tubule of the sperm flagellum. The chain is Tektin-5 from Mus musculus (Mouse).